The chain runs to 273 residues: Pantothenate synthetase (273 aa).

27–34 (MGALHDGH) serves as a coordination point for ATP. H34 serves as the catalytic Proton donor. Q58 serves as a coordination point for (R)-pantoate. Q58 serves as a coordination point for beta-alanine. 144–147 (GKKD) is an ATP binding site. A (R)-pantoate-binding site is contributed by Q150. ATP-binding positions include V173 and 181 to 184 (LSSR).

It belongs to the pantothenate synthetase family. Homodimer.

Its subcellular location is the cytoplasm. It catalyses the reaction (R)-pantoate + beta-alanine + ATP = (R)-pantothenate + AMP + diphosphate + H(+). The protein operates within cofactor biosynthesis; (R)-pantothenate biosynthesis; (R)-pantothenate from (R)-pantoate and beta-alanine: step 1/1. Its function is as follows. Catalyzes the condensation of pantoate with beta-alanine in an ATP-dependent reaction via a pantoyl-adenylate intermediate. The protein is Pantothenate synthetase of Campylobacter curvus (strain 525.92).